The following is a 102-amino-acid chain: Parathymosin (102 aa).

A disordered region spans residues 1–102 (MSEKSVEAAA…RQKTENGASA (102 aa)). At serine 2 the chain carries N-acetylserine. Serine 2 is subject to Phosphoserine. The residue at position 4 (lysine 4) is an N6-acetyllysine. Residues serine 5 and serine 13 each carry the phosphoserine modification. The segment covering 13-37 (SAKDLKEKKEKVEEKASRKERKKEV) has biased composition (basic and acidic residues). Residue lysine 15 is modified to N6-acetyllysine. Acidic residues predominate over residues 38–76 (VEEEENGAEEEEEETAEDGEEEDEGEEEDEEEEEEDDEG). Threonine 52 is subject to Phosphothreonine. Residue lysine 92 is modified to N6-acetyllysine.

The protein belongs to the pro/parathymosin family.

In terms of biological role, parathymosin may mediate immune function by blocking the effect of prothymosin alpha which confers resistance to certain opportunistic infections. In Homo sapiens (Human), this protein is Parathymosin (PTMS).